The chain runs to 544 residues: MSRQSLTKAHAKITELSWDPTFATPATRFGTDYTFEKAPKKDPLKQIMRSYFPMEEEKDNRVYGAMDGAIRGNMFRQVQQRWLEWQKLFLSIIPFPEISAARAMPMAIDAVPNPEIHNGLAVQMIDEVRHSTIQMNLKKLYMNNYIDPAGFDMTEKAFANNYAGTIGRQFGEGFITGDAITAANIYLTVVAETAFTNTLFVAMPDEAAANGDYLLPTVFHSVQSDESRHISNGYSILLMALADERNRPLLERDLRYAWWNNHCVVDAAIGTFIEYGTKDRRKDRESYAEMWRRWIYDDYYRSYLIPLEKYGLTIPHDLVEEAWKRITDKGYVHEVARFFATGWPVNYWRIDAMTDKDFEWFEHKYPGWYSKYGKWWEEYNRLAYPGRNKPIAFEEVGYQYPHRCWTCMVPALIREDMVVEKVDDQWRTYCSETCYWTDAVAFRSEYQGRPTPNMGRLTGFREWETLHHGKDLADIVSDLGYVRDDGKTLVGQPHLDLDDPKKMWTLDDVRGNTFQSPNVLLNEMSDAERNAHIAAYRAGGAVPA.

Residues E97, E127, H130, E192, E226, and H229 each contribute to the Fe cation site.

The protein belongs to the TmoA/XamoA family. As to quaternary structure, the propane 2-monooxygenase multicomponent enzyme system is composed of an electron transfer component and a monooxygenase component interacting with the effector protein PrmD. The electron transfer component is composed of a reductase (PrmB), and the monooxygenase component is formed by a large subunit (PrmA) and a small subunit (PrmC). Probably requires the presence of the chaperonin-like protein PrmG to ensure a productive folding, resulting of a soluble PrmA, which leads to the active form of PrmABCD. The cofactor is Fe(2+).

It catalyses the reaction propane + NADH + O2 + H(+) = propan-2-ol + NAD(+) + H2O. Component of the propane 2-monooxygenase multicomponent enzyme system which is involved in the degradation of propane via the O2-dependent hydroxylation of propane. Also able to catalyze the oxidation the water contaminant N-nitrosodimethylamine (NDMA). The sequence is that of Propane 2-monooxygenase, hydroxylase component large subunit from Rhodococcus jostii (strain RHA1).